We begin with the raw amino-acid sequence, 245 residues long: MIKQTIVALLLSVGASSVFAAGTVKVFSNGSSEAKTLTGAEHLIDLVGQPRLANSWWPGAVISEELATAAALRQQQALLTRLAEQGADSSADDAAAINALRQQIQALKVTGRQKINLDPDIVRVAERGNPPLQGNYTLWVGPPPSTVTLFGLISRPGKQPFTPGRDVASYLSDQSLLSGADRSYAWVVYPDGRTQKAPVAYWNKRHVEPMPGSIIYVGLADSVWSETPDALNADILQTLTQRIPQ.

Residues 1–20 (MIKQTIVALLLSVGASSVFA) form the signal peptide.

It to E.coli YmcB.

This is an uncharacterized protein from Escherichia coli (strain K12).